The chain runs to 466 residues: Ribulose bisphosphate carboxylase large chain (466 aa).

K5 carries the N6,N6,N6-trimethyllysine modification. Substrate is bound by residues N114 and T164. Residue K166 is the Proton acceptor of the active site. Substrate is bound at residue K168. Mg(2+) contacts are provided by K192, D194, and E195. K192 carries the N6-carboxylysine modification. H285 acts as the Proton acceptor in catalysis. Positions 286, 318, and 370 each coordinate substrate.

The protein belongs to the RuBisCO large chain family. Type I subfamily. Heterohexadecamer of 8 large chains and 8 small chains; disulfide-linked. The disulfide link is formed within the large subunit homodimers. Requires Mg(2+) as cofactor. In terms of processing, the disulfide bond which can form in the large chain dimeric partners within the hexadecamer appears to be associated with oxidative stress and protein turnover.

The protein resides in the plastid. Its subcellular location is the chloroplast. The enzyme catalyses 2 (2R)-3-phosphoglycerate + 2 H(+) = D-ribulose 1,5-bisphosphate + CO2 + H2O. The catalysed reaction is D-ribulose 1,5-bisphosphate + O2 = 2-phosphoglycolate + (2R)-3-phosphoglycerate + 2 H(+). In terms of biological role, ruBisCO catalyzes two reactions: the carboxylation of D-ribulose 1,5-bisphosphate, the primary event in carbon dioxide fixation, as well as the oxidative fragmentation of the pentose substrate in the photorespiration process. Both reactions occur simultaneously and in competition at the same active site. The sequence is that of Ribulose bisphosphate carboxylase large chain from Drosera capensis (Cape sundew).